Consider the following 146-residue polypeptide: MAGRKGGDRKKAVTRSVKAGLQFPVGRIGRYLKKGRYAQRVGSGAPVYLAAVLEYLAAEVLELAGNAAKDNKKTRIIPRHLLLAVRNDQELGRLLAGVTIAHGGVIPNINSVLLPKKSPAAAEKEAKSPKKKTSTKSPKKKVAAKE.

The tract at residues 118 to 146 (SPAAAEKEAKSPKKKTSTKSPKKKVAAKE) is disordered. Short sequence motifs (SPKK motif) lie at residues 128 to 131 (SPKK) and 137 to 140 (SPKK). A compositionally biased stretch (basic residues) spans 129 to 146 (PKKKTSTKSPKKKVAAKE).

Belongs to the histone H2A family. In terms of assembly, the nucleosome is a histone octamer containing two molecules each of H2A, H2B, H3 and H4 assembled in one H3-H4 heterotetramer and two H2A-H2B heterodimers. The octamer wraps approximately 147 bp of DNA. Post-translationally, phosphorylated within its C-terminal part, probably at the SPKK motifs. In terms of tissue distribution, expressed preferentially in meristematic tissues of young seedlings, in stigma and ovary but not in pollen.

The protein localises to the nucleus. The protein resides in the chromosome. Its function is as follows. Core component of nucleosome. Nucleosomes wrap and compact DNA into chromatin, limiting DNA accessibility to the cellular machineries which require DNA as a template. Histones thereby play a central role in transcription regulation, DNA repair, DNA replication and chromosomal stability. DNA accessibility is regulated via a complex set of post-translational modifications of histones, also called histone code, and nucleosome remodeling. This Triticum aestivum (Wheat) protein is Histone H2A.1 (H2A-9).